The sequence spans 394 residues: NAD(P)H-quinone oxidoreductase subunit H (394 aa).

Belongs to the complex I 49 kDa subunit family. In terms of assembly, NDH-1 can be composed of about 15 different subunits; different subcomplexes with different compositions have been identified which probably have different functions.

Its subcellular location is the cellular thylakoid membrane. The enzyme catalyses a plastoquinone + NADH + (n+1) H(+)(in) = a plastoquinol + NAD(+) + n H(+)(out). It carries out the reaction a plastoquinone + NADPH + (n+1) H(+)(in) = a plastoquinol + NADP(+) + n H(+)(out). Functionally, NDH-1 shuttles electrons from an unknown electron donor, via FMN and iron-sulfur (Fe-S) centers, to quinones in the respiratory and/or the photosynthetic chain. The immediate electron acceptor for the enzyme in this species is believed to be plastoquinone. Couples the redox reaction to proton translocation, and thus conserves the redox energy in a proton gradient. Cyanobacterial NDH-1 also plays a role in inorganic carbon-concentration. The sequence is that of NAD(P)H-quinone oxidoreductase subunit H from Prochlorococcus marinus (strain SARG / CCMP1375 / SS120).